Here is a 130-residue protein sequence, read N- to C-terminus: Small ribosomal subunit protein uS9 (130 aa).

Positions 111–130 (VERKKVGLHKARRATQFSKR) are disordered. Over residues 116 to 130 (VGLHKARRATQFSKR) the composition is skewed to basic residues.

The protein belongs to the universal ribosomal protein uS9 family.

The protein is Small ribosomal subunit protein uS9 of Xylella fastidiosa (strain M23).